Consider the following 122-residue polypeptide: Large ribosomal subunit protein uL14 (122 aa).

The protein belongs to the universal ribosomal protein uL14 family. Part of the 50S ribosomal subunit. Forms a cluster with proteins L3 and L19. In the 70S ribosome, L14 and L19 interact and together make contacts with the 16S rRNA in bridges B5 and B8.

In terms of biological role, binds to 23S rRNA. Forms part of two intersubunit bridges in the 70S ribosome. The polypeptide is Large ribosomal subunit protein uL14 (Geobacillus kaustophilus (strain HTA426)).